A 449-amino-acid polypeptide reads, in one-letter code: Gamma conglutin 1 (449 aa).

The first 33 residues, 1-33 (MARNMAHILHILVISLSYSFLFVSSSSQDSQSL), serve as a signal peptide directing secretion. The Peptidase A1 domain occupies 60–429 (HWANIHKRTP…DLERSRVGFN (370 aa)). 5 cysteine pairs are disulfide-bonded: C88–C178, C102–C115, C107–C133, C118–C128, and C350–C391. N-linked (GlcNAc...) asparagine glycosylation occurs at N130.

Belongs to the peptidase A1 family. Two-subunit monomeric unit made of alpha and beta subunits coupled by disulfide bonds (at pH 4.5 and under non-reducing conditions). Can also form oligomers including dimer, tetramer and cyclic hexamer (trimer of dimers) (at pH &gt; 5.5). Component of globulins complexes which accumulate in seeds. Interacts with flavonoids (e.g. apigenin glucosides) present in globulins complexes. Forms a static complex with vitexin. In terms of processing, undergoes very complex post-translational maturation; the proteolytic processing leading to the formation of two alpha and beta subunits is incomplete, leaving a certain amount of the protein in an uncut form. Glycosylated on alpha chain. Expressed in developing cotyledons and in the embryonic axis of germinating seeds. Accumulates in seeds, especially in the protein bodies of developing cotyledonary cells (at protein level). Also detected, at low levels, in plumules and radicles.

Its subcellular location is the secreted. It localises to the extracellular space. In terms of biological role, sulfur-rich seed storage protein that remains undegraded at germination. This is Gamma conglutin 1 from Lupinus angustifolius (Narrow-leaved blue lupine).